Here is a 387-residue protein sequence, read N- to C-terminus: MLPDGVVDVLFEDAHKQEVLRHQLIQQLISHGYQLVNPPMIEFTESLLSGASEDLKRQTFKIIDQLTGRLMGIRADITPQILRIDAHHGGDGIARYCYAGDVIHTLPSGLFGSRTPLQLGAEIFGCEYIAADIELIDVLFSMLNSLEMSAALHVDLGHVAIFKRLAELAVLSESDTEQLMQLYANKNLPELKQVCQALPLGSDFYTLARFGHDIANLLGRLSENAQQDAQIVTAIDELQRLKAHLQVQWQCAVSIDVTELSGYHYHTGIVFNGYINSETQPLVRGGRFDGMKSNQLATNQPRQATGFSMDVSRLLAHTQLDAPVIVLVDYDAFKDLGSEQLQLLLQQVASLRQQGYRVTMPLTAKDIPVGMTHRLSLVDNQWQLHAV.

This sequence belongs to the class-II aminoacyl-tRNA synthetase family. HisZ subfamily. In terms of assembly, heteromultimer composed of HisG and HisZ subunits.

Its subcellular location is the cytoplasm. It participates in amino-acid biosynthesis; L-histidine biosynthesis; L-histidine from 5-phospho-alpha-D-ribose 1-diphosphate: step 1/9. In terms of biological role, required for the first step of histidine biosynthesis. May allow the feedback regulation of ATP phosphoribosyltransferase activity by histidine. This chain is ATP phosphoribosyltransferase regulatory subunit, found in Psychrobacter cryohalolentis (strain ATCC BAA-1226 / DSM 17306 / VKM B-2378 / K5).